The sequence spans 182 residues: Large ribosomal subunit protein uL5 (182 aa).

It belongs to the universal ribosomal protein uL5 family. Part of the 50S ribosomal subunit; part of the 5S rRNA/L5/L18/L25 subcomplex. Contacts the 5S rRNA and the P site tRNA. Forms a bridge to the 30S subunit in the 70S ribosome.

This is one of the proteins that bind and probably mediate the attachment of the 5S RNA into the large ribosomal subunit, where it forms part of the central protuberance. In the 70S ribosome it contacts protein S13 of the 30S subunit (bridge B1b), connecting the 2 subunits; this bridge is implicated in subunit movement. Contacts the P site tRNA; the 5S rRNA and some of its associated proteins might help stabilize positioning of ribosome-bound tRNAs. This is Large ribosomal subunit protein uL5 from Mycoplasma mobile (strain ATCC 43663 / 163K / NCTC 11711) (Mesomycoplasma mobile).